We begin with the raw amino-acid sequence, 333 residues long: Electron transfer flavoprotein subunit alpha, mitochondrial (333 aa).

A mitochondrion-targeting transit peptide spans 1 to 19 (MFRAAAPGQLRRATSLLRF). Residues 20–204 (QSTLVIAEHA…GISEWLDQKL (185 aa)) are domain I. Lysine 59 is modified (N6-acetyllysine; alternate). Lysine 59 bears the N6-succinyllysine; alternate mark. At lysine 62 the chain carries N6-acetyllysine. Lysine 69 carries the post-translational modification N6-acetyllysine; alternate. At lysine 69 the chain carries N6-succinyllysine; alternate. Lysine 75 is subject to N6-acetyllysine. Residue lysine 85 is modified to N6-acetyllysine; alternate. Lysine 85 is subject to N6-succinyllysine; alternate. Threonine 93 is subject to Phosphothreonine. An N6-acetyllysine mark is found at lysine 101 and lysine 139. A Phosphoserine modification is found at serine 140. Lysine 158 is modified (N6-acetyllysine; alternate). Residue lysine 158 is modified to N6-succinyllysine; alternate. Lysine 164 carries the post-translational modification N6-acetyllysine. N6-succinyllysine is present on lysine 187. N6-acetyllysine; alternate is present on lysine 203. The residue at position 203 (lysine 203) is an N6-succinyllysine; alternate. The interval 205–333 (TKSDRPELTG…PEMTELLKKK (129 aa)) is domain II. Position 216 is an N6-succinyllysine (lysine 216). Residue arginine 223 participates in FAD binding. Lysine 226 and lysine 232 each carry N6-acetyllysine; alternate. N6-succinyllysine; alternate is present on residues lysine 226 and lysine 232. Residues serine 248, 263-266 (VGQT), 281-286 (SGAIQH), and asparagine 300 each bind FAD. The residue at position 301 (lysine 301) is an N6-succinyllysine. 318–319 (DL) contributes to the FAD binding site.

Belongs to the ETF alpha-subunit/FixB family. In terms of assembly, heterodimer composed of ETFA and ETFB. Identified in a complex that contains ETFA, ETFB and ETFRF1. Interaction with ETFRF1 promotes dissociation of the bound FAD and loss of electron transfer activity. Interacts with TASOR. FAD serves as cofactor.

The protein localises to the mitochondrion matrix. Functionally, heterodimeric electron transfer flavoprotein that accepts electrons from several mitochondrial dehydrogenases, including acyl-CoA dehydrogenases, glutaryl-CoA and sarcosine dehydrogenase. It transfers the electrons to the main mitochondrial respiratory chain via ETF-ubiquinone oxidoreductase (ETF dehydrogenase). Required for normal mitochondrial fatty acid oxidation and normal amino acid metabolism. The protein is Electron transfer flavoprotein subunit alpha, mitochondrial (ETFA) of Bos taurus (Bovine).